The sequence spans 396 residues: Tryptophan synthase beta chain (396 aa).

K88 carries the N6-(pyridoxal phosphate)lysine modification.

Belongs to the TrpB family. Tetramer of two alpha and two beta chains. Pyridoxal 5'-phosphate is required as a cofactor.

The catalysed reaction is (1S,2R)-1-C-(indol-3-yl)glycerol 3-phosphate + L-serine = D-glyceraldehyde 3-phosphate + L-tryptophan + H2O. Its pathway is amino-acid biosynthesis; L-tryptophan biosynthesis; L-tryptophan from chorismate: step 5/5. The beta subunit is responsible for the synthesis of L-tryptophan from indole and L-serine. The chain is Tryptophan synthase beta chain from Shewanella oneidensis (strain ATCC 700550 / JCM 31522 / CIP 106686 / LMG 19005 / NCIMB 14063 / MR-1).